Consider the following 278-residue polypeptide: Large ribosomal subunit protein uL2 (278 aa).

The span at 210–219 shows a compositional bias: basic residues; it reads RKRWLGKRPQ. The segment at 210 to 278 is disordered; sequence RKRWLGKRPQ…LIIRHRKGSK (69 aa). Residues 258 to 270 are compositionally biased toward basic and acidic residues; that stretch reads KTRDVKKASEKLI.

This sequence belongs to the universal ribosomal protein uL2 family. Part of the 50S ribosomal subunit. Forms a bridge to the 30S subunit in the 70S ribosome.

In terms of biological role, one of the primary rRNA binding proteins. Required for association of the 30S and 50S subunits to form the 70S ribosome, for tRNA binding and peptide bond formation. It has been suggested to have peptidyltransferase activity; this is somewhat controversial. Makes several contacts with the 16S rRNA in the 70S ribosome. This is Large ribosomal subunit protein uL2 from Lactobacillus acidophilus (strain ATCC 700396 / NCK56 / N2 / NCFM).